The chain runs to 429 residues: UDP-N-acetylglucosamine 1-carboxyvinyltransferase (429 aa).

Phosphoenolpyruvate is bound at residue 22–23; sequence KN. Residue arginine 102 coordinates UDP-N-acetyl-alpha-D-glucosamine. Cysteine 126 (proton donor) is an active-site residue. At cysteine 126 the chain carries 2-(S-cysteinyl)pyruvic acid O-phosphothioketal. UDP-N-acetyl-alpha-D-glucosamine-binding positions include 131 to 135, aspartate 316, and isoleucine 338; that span reads RPVDL.

This sequence belongs to the EPSP synthase family. MurA subfamily.

It localises to the cytoplasm. The catalysed reaction is phosphoenolpyruvate + UDP-N-acetyl-alpha-D-glucosamine = UDP-N-acetyl-3-O-(1-carboxyvinyl)-alpha-D-glucosamine + phosphate. It functions in the pathway cell wall biogenesis; peptidoglycan biosynthesis. Cell wall formation. Adds enolpyruvyl to UDP-N-acetylglucosamine. The polypeptide is UDP-N-acetylglucosamine 1-carboxyvinyltransferase (Nitrobacter hamburgensis (strain DSM 10229 / NCIMB 13809 / X14)).